Here is a 519-residue protein sequence, read N- to C-terminus: Protein nucleotidyltransferase YdiU (519 aa).

Residues Gly100, Gly102, Arg103, Lys123, Asp135, Gly136, Arg193, and Arg200 each coordinate ATP. Asp270 serves as the catalytic Proton acceptor. 2 residues coordinate Mg(2+): Asn271 and Asp280. Asp280 is a binding site for ATP.

This sequence belongs to the SELO family. Requires Mg(2+) as cofactor. Mn(2+) serves as cofactor.

The catalysed reaction is L-seryl-[protein] + ATP = 3-O-(5'-adenylyl)-L-seryl-[protein] + diphosphate. It carries out the reaction L-threonyl-[protein] + ATP = 3-O-(5'-adenylyl)-L-threonyl-[protein] + diphosphate. It catalyses the reaction L-tyrosyl-[protein] + ATP = O-(5'-adenylyl)-L-tyrosyl-[protein] + diphosphate. The enzyme catalyses L-histidyl-[protein] + UTP = N(tele)-(5'-uridylyl)-L-histidyl-[protein] + diphosphate. The catalysed reaction is L-seryl-[protein] + UTP = O-(5'-uridylyl)-L-seryl-[protein] + diphosphate. It carries out the reaction L-tyrosyl-[protein] + UTP = O-(5'-uridylyl)-L-tyrosyl-[protein] + diphosphate. Functionally, nucleotidyltransferase involved in the post-translational modification of proteins. It can catalyze the addition of adenosine monophosphate (AMP) or uridine monophosphate (UMP) to a protein, resulting in modifications known as AMPylation and UMPylation. This chain is Protein nucleotidyltransferase YdiU, found in Xylella fastidiosa (strain Temecula1 / ATCC 700964).